A 366-amino-acid chain; its full sequence is MASGSSSDAAESAEPAAAPAAAETEEDQVKRRRLQSLGFALVTSCDTTVASTFLSENNWQTKKALSAFFEQPENDLARPHQPPTSSKSEDYVDLTNEDANDTTILETSPSGTPLEDSSTISFITWNIDGLDGCNLPERARGVCSCLALYSPDVVFLQEVIPSYCAYLRKRARTYNIITGNEEGYFTAILLKKGRVKFKGQEIIPFPNTKMMRNLLCVNVSLGGNEFCLMTSHLESTRKHSAERINQLKTVFQKMQEATDSTTVIFAGDTNLRDQEVIKCGGLPDNVFDAWEFLGKPKHCRYTWDTKANDNLRIPAACKHRFDRIFFRAEEGHLIPQSLDLIGLERLDCGRFPSDHWGLLCTLNVVL.

Residue Met1 is modified to N-acetylmethionine. Over residues 1 to 22 (MASGSSSDAAESAEPAAAPAAA) the composition is skewed to low complexity. Positions 1–30 (MASGSSSDAAESAEPAAAPAAAETEEDQVK) are disordered. A Glycyl lysine isopeptide (Lys-Gly) (interchain with G-Cter in SUMO2) cross-link involves residue Lys30. At Thr95 the chain carries Phosphothreonine; by ACVR1B. The segment at 126–130 (NIDGL) is interaction with 5' end of substrate DNA. Residues Asp128 and Glu158 each coordinate Mg(2+). Residues 232 to 237 (HLESTR) are interaction with 5' end of substrate DNA. Catalysis depends on Asp268, which acts as the Proton donor/acceptor. Positions 270–272 (NLR) are interaction with 5' end of substrate DNA.

The protein belongs to the CCR4/nocturin family. As to quaternary structure, interacts with TRAF2, TRAF3, TRAF5, TRAF6, TNFRSF8/CD30, TNFRSF5/CD40, TNFRSF1B/TNF-R75, ETS1, ETS2, FLI1, SMAD3 and ACVR1B/ALK4. Mg(2+) serves as cofactor. Mn(2+) is required as a cofactor. In terms of processing, ubiquitinated by TRAF6.

Its subcellular location is the nucleus. The protein localises to the PML body. It localises to the nucleolus. It is found in the cytoplasm. Functionally, DNA repair enzyme that can remove a variety of covalent adducts from DNA through hydrolysis of a 5'-phosphodiester bond, giving rise to DNA with a free 5' phosphate. Catalyzes the hydrolysis of dead-end complexes between DNA and the topoisomerase 2 (TOP2) active site tyrosine residue. The 5'-tyrosyl DNA phosphodiesterase activity can enable the repair of TOP2-induced DNA double-strand breaks/DSBs without the need for nuclease activity, creating a 'clean' DSB with 5'-phosphate termini that are ready for ligation. Thereby, protects the transcription of many genes involved in neurological development and maintenance from the abortive activity of TOP2. Hydrolyzes 5'-phosphoglycolates on protruding 5' ends on DSBs due to DNA damage by radiation and free radicals. Has preference for single-stranded DNA or duplex DNA with a 4 base pair overhang as substrate. Also has 3'-tyrosyl DNA phosphodiesterase activity, but less efficiently and much slower than TDP1. Constitutes the major if not only 5'-tyrosyl-DNA phosphodiesterase in cells. Also acts as an adapter by participating in the specific activation of MAP3K7/TAK1 in response to TGF-beta: associates with components of the TGF-beta receptor-TRAF6-TAK1 signaling module and promotes their ubiquitination dependent complex formation. Involved in non-canonical TGF-beta induced signaling routes. May also act as a negative regulator of ETS1 and may inhibit NF-kappa-B activation. Acts as a regulator of ribosome biogenesis following stress. This Rattus norvegicus (Rat) protein is Tyrosyl-DNA phosphodiesterase 2 (Tdp2).